The sequence spans 825 residues: Probable inorganic carbon transporter subunit DabA (825 aa).

Zn(2+) is bound by residues Cys-334, Asp-336, His-521, and Cys-536.

The protein belongs to the inorganic carbon transporter (TC 9.A.2) DabA family. Forms a complex with DabB. The cofactor is Zn(2+).

It is found in the cell inner membrane. In terms of biological role, part of an energy-coupled inorganic carbon pump. This is Probable inorganic carbon transporter subunit DabA from Acidithiobacillus ferrooxidans (strain ATCC 53993 / BNL-5-31) (Leptospirillum ferrooxidans (ATCC 53993)).